A 69-amino-acid chain; its full sequence is Large ribosomal subunit protein bL31 (69 aa).

Zn(2+) contacts are provided by Cys-17, Cys-19, Cys-37, and Cys-40.

This sequence belongs to the bacterial ribosomal protein bL31 family. Type A subfamily. As to quaternary structure, part of the 50S ribosomal subunit. Zn(2+) is required as a cofactor.

Its function is as follows. Binds the 23S rRNA. In Caldanaerobacter subterraneus subsp. tengcongensis (strain DSM 15242 / JCM 11007 / NBRC 100824 / MB4) (Thermoanaerobacter tengcongensis), this protein is Large ribosomal subunit protein bL31.